A 225-amino-acid polypeptide reads, in one-letter code: 3-dehydroquinate dehydratase (225 aa).

3-dehydroquinate contacts are provided by residues 30–32 (EWR) and Arg62. Residue His118 is the Proton donor/acceptor of the active site. The active-site Schiff-base intermediate with substrate is Lys143. The 3-dehydroquinate site is built by Arg186, Ser205, and Gln209.

Belongs to the type-I 3-dehydroquinase family. As to quaternary structure, homodimer.

It catalyses the reaction 3-dehydroquinate = 3-dehydroshikimate + H2O. It participates in metabolic intermediate biosynthesis; chorismate biosynthesis; chorismate from D-erythrose 4-phosphate and phosphoenolpyruvate: step 3/7. Functionally, involved in the third step of the chorismate pathway, which leads to the biosynthesis of aromatic amino acids. Catalyzes the cis-dehydration of 3-dehydroquinate (DHQ) and introduces the first double bond of the aromatic ring to yield 3-dehydroshikimate. The protein is 3-dehydroquinate dehydratase of Streptococcus mutans serotype c (strain ATCC 700610 / UA159).